Consider the following 110-residue polypeptide: Chorion class B protein M2410 (110 aa).

Repeat copies occupy residues 1 to 4 (YGGL), 5 to 9 (GYGGL), 10 to 14 (GYGGL), and 15 to 19 (GYGGL). The interval 1–19 (YGGLGYGGLGYGGLGYGGL) is 4 X 5 AA tandem repeats of G-Y-G-G-L. The segment at 1–27 (YGGLGYGGLGYGGLGYGGLGGGCGRGF) is left arm. The tract at residues 28–96 (SGGGLPVATA…GNGDVGITRE (69 aa)) is central domain. The interval 97 to 110 (GGLGYGAGYGGGYG) is right arm (Gly-rich tandem repeats).

Belongs to the chorion protein family.

Functionally, this protein is one of many from the eggshell of the silk moth. The chain is Chorion class B protein M2410 from Bombyx mori (Silk moth).